A 118-amino-acid polypeptide reads, in one-letter code: Putative pterin-4-alpha-carbinolamine dehydratase (118 aa).

Belongs to the pterin-4-alpha-carbinolamine dehydratase family.

The catalysed reaction is (4aS,6R)-4a-hydroxy-L-erythro-5,6,7,8-tetrahydrobiopterin = (6R)-L-erythro-6,7-dihydrobiopterin + H2O. The chain is Putative pterin-4-alpha-carbinolamine dehydratase from Xanthomonas campestris pv. campestris (strain 8004).